Consider the following 1485-residue polypeptide: MQKTPLEKASIFSQIFFSWTKPILWKGYRQRLELSDIYQIHPGDSADNLSERLEREWDREVATSKKNPKLINALKRCFFWKFLFYGILLYLGEVTKAVQPLLLGRIIASYDRDNEHERSIAYYLAIGLCLLFVVRMLLLHPAIFGLHHIGMQMRIAMFSLIYKKTLKLSSKVLDKISTGQLVSLLSNNLNKFDEGLALAHFVWIAPLQVLLLMGLLWDLLQASAFCGLGFLIILSLFQARLGRMMMKYKDKRAGKINERLVITSQIIENIQSVKAYCWENAMEKIIETIRETELKLTRKAAYVRYFNSSAFFFSGFFVVFLSIVPHLLLDGISLRKIFTTISFSIVLRMAVTRQFPWAVQTWYDSLGVINKIQEFLQKEEYKSLEYNLTTTEVAMENVSASWDEGIGEFFEKAKLEVNGGNISNEDPSAFFSNFSLHVAPVLRNINFKIEKGQLLAIAGSTGAGKTSLLMMIMGELEPSAGKIKHSGRISFSPQVSWIMPGTIKENIVFGVSYDQYRYLSVIKACQLEEDISKFPEKDNTVLGEGGITLSGGQRARISLARAVYKDADLYLLDSPFSYLDLFTEKEIFESCVCKLMANKTRILVTSKVEQLKKADKVLILHEGSCYFYGTFSELEDQRPEFSSHLIGFDHFNAERRNSIITETLRRCSIDSDPSAVRNEVKNKSFKQVADFTEKRKSSIINPRKSSRKFSLMQKSQPQMSGIEEEDMPAEQGERKLSLVPESEQGEASLPRSNFLNTGPTFQGRRRQSVLNLMTRTSISQGSNAFATRNASVRKMSVNSYSNSSFDLDIYNRRLSQDSILEVSEEINEEDLKECFLDDTDSQSPTTTWNTYLRFLTAHKNFIFILVFCLVIFFVEVAASSAWLWIIKRNAPAINMTSNENVSEVSDTLSVIVTHTSFYYVFYIYVGVADSLLALGIFRGLPLVHSLISVSKVLHKKMLHAILHAPMSTFNTMRAGRILNRFSKDTAILDDILPLSIFDLTQLVLIVIGAITVVSLLEPYIFLATVPVIVAFILLRSYFLHTSQQLKQLESKARSPIFAHLITSLKGLWTLRAFGRQPYFETLFHKALNLHTANWFLYLSTLRWFQMTIEMIFVIFFIAVSFISIATSGAGEEKVGIVLTLAMNIMNTLQWAVNASIDVDSLMRSVSRIFRFIDLPVEELINENKNKEEQLSEVLIYENDYVKKTQVWPSGGQMTVKNLSANYIDGGNTVLENISFSLSPGQRVGLLGRTGSGKSTLLSAFLRLLSTQGDIQIDGVSWQTIPLQKWRKAFGVIPQKVFIFSGSIRKNLDPYGKWSDEELLKVTEEVGLKLIIDQFPGQLDFVLLDGGCVLSHGHKQLVCLARSVLSKAKILLLDEPSAHLDPITFQIIRKTLKHAFADCTVILSEHRLEAMLECQRFLVIEDNTVRQYDSIQKLVNEKSFFKQAISHSDRLKLFPLHRRNSSKRKSRPQISALQEETEEEVQDTRL.

Residues 1–78 (MQKTPLEKAS…KLINALKRCF (78 aa)) are Cytoplasmic-facing. Residues 79 to 99 (FWKFLFYGILLYLGEVTKAVQ) traverse the membrane as a helical segment. Residues 82–366 (FLFYGILLYL…WAVQTWYDSL (285 aa)) enclose the ABC transmembrane type-1 1 domain. Residues 100-123 (PLLLGRIIASYDRDNEHERSIAYY) are Extracellular-facing. The helical transmembrane segment at 124-147 (LAIGLCLLFVVRMLLLHPAIFGLH) threads the bilayer. Residues 148-196 (HIGMQMRIAMFSLIYKKTLKLSSKVLDKISTGQLVSLLSNNLNKFDEGL) are Cytoplasmic-facing. A helical membrane pass occupies residues 197–217 (ALAHFVWIAPLQVLLLMGLLW). Residues 218-223 (DLLQAS) lie on the Extracellular side of the membrane. Residues 224–244 (AFCGLGFLIILSLFQARLGRM) form a helical membrane-spanning segment. At 245-299 (MMKYKDKRAGKINERLVITSQIIENIQSVKAYCWENAMEKIIETIRETELKLTRK) the chain is on the cytoplasmic side. A helical membrane pass occupies residues 300 to 320 (AAYVRYFNSSAFFFSGFFVVF). At 321 to 340 (LSIVPHLLLDGISLRKIFTT) the chain is on the extracellular side. A helical membrane pass occupies residues 341–359 (ISFSIVLRMAVTRQFPWAV). Residues 360-860 (QTWYDSLGVI…YLRFLTAHKN (501 aa)) lie on the Cytoplasmic side of the membrane. ATP contacts are provided by residues W402, S435, 459-466 (GSTGAGKT), and Q494. The 226-residue stretch at 422–647 (ISNEDPSAFF…RPEFSSHLIG (226 aa)) folds into the ABC transporter 1 domain. Positions 652–833 (NAERRNSIIT…EEINEEDLKE (182 aa)) are disordered R region. Positions 750 to 760 (PRSNFLNTGPT) are enriched in polar residues. The helical transmembrane segment at 861 to 881 (FIFILVFCLVIFFVEVAASSA) threads the bilayer. The 284-residue stretch at 880–1163 (SAWLWIIKRN…ASIDVDSLMR (284 aa)) folds into the ABC transmembrane type-1 2 domain. The Extracellular segment spans residues 882–923 (WLWIIKRNAPAINMTSNENVSEVSDTLSVIVTHTSFYYVFYI). N894 and N900 each carry an N-linked (GlcNAc...) asparagine glycan. Residues 924 to 944 (YVGVADSLLALGIFRGLPLVH) form a discontinuously helical membrane-spanning segment. Residues 945–995 (SLISVSKVLHKKMLHAILHAPMSTFNTMRAGRILNRFSKDTAILDDILPLS) lie on the Cytoplasmic side of the membrane. Residues 996 to 1016 (IFDLTQLVLIVIGAITVVSLL) form a helical membrane-spanning segment. At 1017 to 1018 (EP) the chain is on the extracellular side. Residues 1019-1039 (YIFLATVPVIVAFILLRSYFL) traverse the membrane as a helical segment. Residues 1040–1100 (HTSQQLKQLE…TANWFLYLST (61 aa)) lie on the Cytoplasmic side of the membrane. Residues 1101–1121 (LRWFQMTIEMIFVIFFIAVSF) form a helical membrane-spanning segment. Topologically, residues 1122–1135 (ISIATSGAGEEKVG) are extracellular. A helical membrane pass occupies residues 1136 to 1156 (IVLTLAMNIMNTLQWAVNASI). Residues 1157 to 1485 (DVDSLMRSVS…TEEEVQDTRL (329 aa)) are Cytoplasmic-facing. One can recognise an ABC transporter 2 domain in the interval 1213 to 1446 (MTVKNLSANY…KSFFKQAISH (234 aa)). Residues Y1222 and 1247–1254 (GRTGSGKS) each bind ATP. Residues 1458–1485 (RNSSKRKSRPQISALQEETEEEVQDTRL) form a disordered region. Residues 1474-1485 (EETEEEVQDTRL) show a composition bias toward acidic residues. A PDZ-binding motif is present at residues 1483-1485 (TRL).

It belongs to the ABC transporter superfamily. ABCC family. CFTR transporter (TC 3.A.1.202) subfamily. Monomer; does not require oligomerization for channel activity. May form oligomers in the membrane. Phosphorylated; cAMP treatment promotes phosphorylation and activates the channel. Dephosphorylation decreases the ATPase activity (in vitro). Phosphorylation at PKA sites activates the channel. Phosphorylation at PKC sites enhances the response to phosphorylation by PKA.

It localises to the apical cell membrane. The protein resides in the early endosome membrane. It is found in the cell membrane. Its subcellular location is the recycling endosome membrane. The protein localises to the endoplasmic reticulum membrane. It catalyses the reaction ATP + H2O + closed Cl(-) channel = ADP + phosphate + open Cl(-) channel.. The enzyme catalyses chloride(in) = chloride(out). It carries out the reaction hydrogencarbonate(in) = hydrogencarbonate(out). The catalysed reaction is ATP + H2O = ADP + phosphate + H(+). Functionally, epithelial ion channel that plays an important role in the regulation of epithelial ion and water transport and fluid homeostasis. Mediates the transport of chloride ions across the cell membrane. Possesses an intrinsic ATPase activity and utilizes ATP to gate its channel; the passive flow of anions through the channel is gated by cycles of ATP binding and hydrolysis by the ATP-binding domains. The ion channel is also permeable to HCO(3)(-); selectivity depends on the extracellular chloride concentration. Exerts its function also by modulating the activity of other ion channels and transporters. Contributes to the regulation of the pH and the ion content of the epithelial fluid layer. This is Cystic fibrosis transmembrane conductance regulator from Xenopus laevis (African clawed frog).